A 135-amino-acid chain; its full sequence is Small ribosomal subunit protein bS16 (135 aa).

A disordered region spans residues 82–135; sequence RPAETVGKAKQAAKREADAKQAAKEAAEAKAAAADEKAAEAEASDSAESESTEG. The span at 94-121 shows a compositional bias: basic and acidic residues; it reads AKREADAKQAAKEAAEAKAAAADEKAAE. The segment covering 123–135 has biased composition (acidic residues); sequence EASDSAESESTEG.

Belongs to the bacterial ribosomal protein bS16 family.

The sequence is that of Small ribosomal subunit protein bS16 from Synechococcus sp. (strain CC9605).